Reading from the N-terminus, the 447-residue chain is Tubulin beta-1 chain (447 aa).

Residues Q11, E69, S138, G142, T143, G144, N204, and N226 each coordinate GTP. E69 is a binding site for Mg(2+). The disordered stretch occupies residues Q424–A447. Positions T429–A447 are enriched in acidic residues.

This sequence belongs to the tubulin family. In terms of assembly, dimer of alpha and beta chains. A typical microtubule is a hollow water-filled tube with an outer diameter of 25 nm and an inner diameter of 15 nM. Alpha-beta heterodimers associate head-to-tail to form protofilaments running lengthwise along the microtubule wall with the beta-tubulin subunit facing the microtubule plus end conferring a structural polarity. Microtubules usually have 13 protofilaments but different protofilament numbers can be found in some organisms and specialized cells. The cofactor is Mg(2+).

It is found in the cytoplasm. Its subcellular location is the cytoskeleton. In terms of biological role, tubulin is the major constituent of microtubules, a cylinder consisting of laterally associated linear protofilaments composed of alpha- and beta-tubulin heterodimers. Microtubules grow by the addition of GTP-tubulin dimers to the microtubule end, where a stabilizing cap forms. Below the cap, tubulin dimers are in GDP-bound state, owing to GTPase activity of alpha-tubulin. The polypeptide is Tubulin beta-1 chain (TUBB1) (Cyanophora paradoxa).